Here is a 392-residue protein sequence, read N- to C-terminus: Speckle-type POZ protein-like B (392 aa).

The MATH domain maps to 31–161 (KFSYMWTINN…DDKLTLFCEV (131 aa)). One can recognise a BTB domain in the interval 200–267 (TDCSLFVGGQ…IYTGKAPNLE (68 aa)).

The protein belongs to the Tdpoz family. In terms of assembly, homodimer. Heterodimer with SPOP. Component of cullin-RING-based BCR (BTB-CUL3-RBX1) E3 ubiquitin-protein ligase complexes containing homodimeric SPOPL or the heterodimer formed by SPOP and SPOPL.

It localises to the nucleus. The protein operates within protein modification; protein ubiquitination. Its function is as follows. Component of a cullin-RING-based BCR (BTB-CUL3-RBX1) E3 ubiquitin-protein ligase complex that mediates the ubiquitination and subsequent proteasomal degradation of target proteins, but with relatively low efficiency. This chain is Speckle-type POZ protein-like B (spoplb), found in Danio rerio (Zebrafish).